The chain runs to 280 residues: Energy-coupling factor transporter ATP-binding protein EcfA1 (280 aa).

The ABC transporter domain maps to 6–241 (LRIENISFQY…SHMLQEIGLD (236 aa)). Residue 40–47 (GQNGSGKS) participates in ATP binding.

It belongs to the ABC transporter superfamily. Energy-coupling factor EcfA family. As to quaternary structure, forms a stable energy-coupling factor (ECF) transporter complex composed of 2 membrane-embedded substrate-binding proteins (S component), 2 ATP-binding proteins (A component) and 2 transmembrane proteins (T component).

It is found in the cell membrane. ATP-binding (A) component of a common energy-coupling factor (ECF) ABC-transporter complex. Unlike classic ABC transporters this ECF transporter provides the energy necessary to transport a number of different substrates. The protein is Energy-coupling factor transporter ATP-binding protein EcfA1 of Bacillus cereus (strain ATCC 14579 / DSM 31 / CCUG 7414 / JCM 2152 / NBRC 15305 / NCIMB 9373 / NCTC 2599 / NRRL B-3711).